The chain runs to 359 residues: Oplophorus-luciferin 2-monooxygenase non-catalytic subunit (359 aa).

The signal sequence occupies residues 1-39; it reads MAVNFKFSLLTITIVVNILVYCNASAIKFDVDLEKVPSN. 8 LRR repeats span residues 135-158, 160-180, 181-203, 228-251, 255-278, 280-300, 302-325, and 331-356; these read AATL…EMSQ, TKLN…ALSS, DTLA…AFQT, SPKL…AIKL, GPTT…AVEG, QGIL…VWRP, LENL…MWLI, and LAKI…VFHA.

As to quaternary structure, heterotetramer of a catalytic 19 kDa and a non-catalytic 35 kDa subunit.

It localises to the secreted. Functionally, non-catalytic subunit of oplophorus-luciferin 2-monooxygenase. May stabilize the active conformation of the catalytic subunit. In Oplophorus gracilirostris (Luminous shrimp), this protein is Oplophorus-luciferin 2-monooxygenase non-catalytic subunit.